We begin with the raw amino-acid sequence, 134 residues long: MKITRHQERVWALQILYSLDISSELNIQKARKTCREFKYKKVLDKKRYYFEDIVEGVINSRQDLDSIINKYAIDWDVERMACIDRNILRIALYEIESGLPVGVAIDEAVEIAKDFGDSNSPKFINGILAKSIED.

Belongs to the NusB family.

Involved in transcription antitermination. Required for transcription of ribosomal RNA (rRNA) genes. Binds specifically to the boxA antiterminator sequence of the ribosomal RNA (rrn) operons. The polypeptide is Transcription antitermination protein NusB (Halothermothrix orenii (strain H 168 / OCM 544 / DSM 9562)).